The sequence spans 250 residues: Green-light absorbing proteorhodopsin (250 aa).

The N-terminal stretch at 1–18 (MGKLLLILGSVIALPTFA) is a signal peptide. The Extracellular segment spans residues 19–29 (AGGGDLDASDY). A helical transmembrane segment spans residues 30 to 53 (TGVSFWLVTAALLASTVFFFVERD). The Cytoplasmic portion of the chain corresponds to 54 to 58 (RVSAK). A helical membrane pass occupies residues 59-87 (WKTSLTVSGLVTGIAFWHYMYMRGVWIET). The Extracellular segment spans residues 88-90 (GDS). The chain crosses the membrane as a helical span at residues 91-118 (PTVFRYIDWLLTVPLLICEFYLILAAAT). The Cytoplasmic segment spans residues 119–121 (NVA). The chain crosses the membrane as a helical span at residues 122-144 (GSLFKKLLVGSLVMLVFGYMGEA). Topologically, residues 145–147 (GIM) are extracellular. Residues 148-177 (AAWPAFIIGCLAWVYMIYELWAGEGKSACN) form a helical membrane-spanning segment. The Cytoplasmic segment spans residues 178–180 (TAS). Residues 181-208 (PAVQSAYNTMMYIIIFGWAIYPVGYFTG) traverse the membrane as a helical segment. Over 209 to 218 (YLMGDGGSAL) the chain is Extracellular. A helical membrane pass occupies residues 219 to 249 (NLNLIYNLADFVNKILFGLIIWNVAVKESSN). Lys232 is subject to N6-(retinylidene)lysine. A topological domain (cytoplasmic) is located at residue Ala250.

It belongs to the archaeal/bacterial/fungal opsin family. In terms of assembly, homopentamer. GPR protomers assemble into a pentamer around a central pore with a C5 symmetry axis. In terms of processing, contains one covalently linked retinal chromophore per subunit.

It is found in the cell membrane. In terms of biological role, light-driven proton pump. This chain is Green-light absorbing proteorhodopsin, found in Unknown prokaryotic organism.